The sequence spans 328 residues: P2Y purinoceptor 6 (328 aa).

Over 1 to 27 (MEQDNGTIQAPGLPPTTCVYREDFKRL) the chain is Extracellular. Asn-5 is a glycosylation site (N-linked (GlcNAc...) asparagine). A helical transmembrane segment spans residues 28–48 (LLTPVYSVVLVVGLPLNICVI). Over 49–62 (AQICASRRTLTRSA) the chain is Cytoplasmic. A helical membrane pass occupies residues 63 to 83 (VYTLNLALADLMYACSLPLLI). The Extracellular segment spans residues 84–101 (YNYARGDHWPFGDLACRF). Residues Cys-99 and Cys-177 are joined by a disulfide bond. Residues 102-122 (VRFLFYANLHGSILFLTCISF) form a helical membrane-spanning segment. The Cytoplasmic portion of the chain corresponds to 123-144 (QRYLGICHPLASWHKRGGRRAA). Residues 145–165 (WVVCGVVWLAVTAQCLPTAVF) form a helical membrane-spanning segment. Residues 166-194 (AATGIQRNRTVCYDLSPPILSTRYLPYGM) are Extracellular-facing. N-linked (GlcNAc...) asparagine glycosylation occurs at Asn-173. Residues 195 to 215 (ALTVIGFLLPFIALLACYCRM) form a helical membrane-spanning segment. Residues 216–236 (ARRLCRQDGPAGPVAQERRSK) are Cytoplasmic-facing. The chain crosses the membrane as a helical span at residues 237-257 (AARMAVVVAAVFAISFLPFHI). Topologically, residues 258 to 280 (TKTAYLAVRSTPGVSCPVLETFA) are extracellular. The chain crosses the membrane as a helical span at residues 281–303 (AAYKGTRPFASVNSVLDPILFYF). Over 304–328 (TQQKFRRQPHDLLQRLTAKWQRQRV) the chain is Cytoplasmic.

Belongs to the G-protein coupled receptor 1 family.

Its subcellular location is the cell membrane. Its function is as follows. Receptor for extracellular UTP &gt; ADP = 2-methylthio-ATP &gt; ADP-beta-S &gt; ATP = ATP-gamma-S. The activity of this receptor is mediated by G proteins which activate a phosphatidylinositol-calcium second messenger system. Functionally coupled to phospholipase C. The chain is P2Y purinoceptor 6 (P2ry6) from Mus musculus (Mouse).